Consider the following 473-residue polypeptide: 3-isopropylmalate dehydratase large subunit (473 aa).

The [4Fe-4S] cluster site is built by Cys351, Cys414, and Cys417.

The protein belongs to the aconitase/IPM isomerase family. LeuC type 1 subfamily. Heterodimer of LeuC and LeuD. [4Fe-4S] cluster serves as cofactor.

The catalysed reaction is (2R,3S)-3-isopropylmalate = (2S)-2-isopropylmalate. The protein operates within amino-acid biosynthesis; L-leucine biosynthesis; L-leucine from 3-methyl-2-oxobutanoate: step 2/4. In terms of biological role, catalyzes the isomerization between 2-isopropylmalate and 3-isopropylmalate, via the formation of 2-isopropylmaleate. The protein is 3-isopropylmalate dehydratase large subunit of Polaromonas sp. (strain JS666 / ATCC BAA-500).